The primary structure comprises 185 residues: MINDIKKDAQDRMGKSIEALGRNLASIRTGRAHPSILDSVKVPAWGSEMPLNQVAAVSVEDARTLKIVAHDKNLSAAIEKAILTSDLGLNPSSAGTTIRVPMPALTEETRKGYTKQASAVAEDAKVAVRNVRRDALADLKKLTKDKEISEDEERRAADEIQKLTDKFVAEIDAAFKAKEKDLLAV.

It belongs to the RRF family.

The protein localises to the cytoplasm. Its function is as follows. Responsible for the release of ribosomes from messenger RNA at the termination of protein biosynthesis. May increase the efficiency of translation by recycling ribosomes from one round of translation to another. This is Ribosome-recycling factor from Pseudomonas putida (strain W619).